A 111-amino-acid polypeptide reads, in one-letter code: uncharacterized protein (111 aa).

A helical membrane pass occupies residues 27–47 (HLFHFPSISFFFFFFFFFFSF).

It localises to the membrane. This is an uncharacterized protein from Saccharomyces cerevisiae (strain ATCC 204508 / S288c) (Baker's yeast).